Here is a 372-residue protein sequence, read N- to C-terminus: Cyclin-A3-2 (372 aa).

The disordered stretch occupies residues 53–73 (NQKKETQKPKRNLKPPPAKQI).

Belongs to the cyclin family. Cyclin AB subfamily.

This Arabidopsis thaliana (Mouse-ear cress) protein is Cyclin-A3-2 (CYCA3-2).